The sequence spans 109 residues: Large ribosomal subunit protein uL22 (109 aa).

Belongs to the universal ribosomal protein uL22 family. As to quaternary structure, part of the 50S ribosomal subunit.

This protein binds specifically to 23S rRNA; its binding is stimulated by other ribosomal proteins, e.g. L4, L17, and L20. It is important during the early stages of 50S assembly. It makes multiple contacts with different domains of the 23S rRNA in the assembled 50S subunit and ribosome. In terms of biological role, the globular domain of the protein is located near the polypeptide exit tunnel on the outside of the subunit, while an extended beta-hairpin is found that lines the wall of the exit tunnel in the center of the 70S ribosome. The protein is Large ribosomal subunit protein uL22 of Ralstonia nicotianae (strain ATCC BAA-1114 / GMI1000) (Ralstonia solanacearum).